A 168-amino-acid polypeptide reads, in one-letter code: uncharacterized protein (168 aa).

The next 5 membrane-spanning stretches (helical) occupy residues 15–33 (YLTV…LAVL), 41–57 (LSLT…ASSL), 73–93 (WIGL…GALL), 108–128 (VPLL…WVLN), and 129–149 (NLIA…VLAI).

It localises to the cell membrane. This is an uncharacterized protein from Haemophilus influenzae (strain ATCC 51907 / DSM 11121 / KW20 / Rd).